The sequence spans 440 residues: Glutamate--tRNA ligase 2 (440 aa).

The 'HIGH' region motif lies at 8–18; that stretch reads PSPTGYLHVGN. A 'KMSKS' region motif is present at residues 239–243; sequence ALSKR. Position 242 (lysine 242) interacts with ATP.

Belongs to the class-I aminoacyl-tRNA synthetase family. Glutamate--tRNA ligase type 1 subfamily. Monomer.

The protein localises to the cytoplasm. The catalysed reaction is tRNA(Glu) + L-glutamate + ATP = L-glutamyl-tRNA(Glu) + AMP + diphosphate. Its function is as follows. Catalyzes the attachment of glutamate to tRNA(Glu) in a two-step reaction: glutamate is first activated by ATP to form Glu-AMP and then transferred to the acceptor end of tRNA(Glu). In Dinoroseobacter shibae (strain DSM 16493 / NCIMB 14021 / DFL 12), this protein is Glutamate--tRNA ligase 2.